Reading from the N-terminus, the 481-residue chain is RuvB-like helicase 2 (481 aa).

Residue 76 to 83 (GPPSTGKT) coordinates ATP.

The protein belongs to the RuvB family. As to quaternary structure, may form heterododecamers with hel-1/rvb1. Component of the SWR1 chromatin remodeling complex, the INO80 chromatin remodeling complex, and of the R2TP complex.

It localises to the nucleus. It catalyses the reaction ATP + H2O = ADP + phosphate + H(+). Its function is as follows. DNA helicase which participates in several chromatin remodeling complexes, including the SWR1 and the INO80 complexes. The SWR1 complex mediates the ATP-dependent exchange of histone H2A for the H2A variant H2A.Z leading to transcriptional regulation of selected genes by chromatin remodeling. The INO80 complex remodels chromatin by shifting nucleosomes and is involved in DNA repair. Also involved in pre-rRNA processing. In Neurospora crassa (strain ATCC 24698 / 74-OR23-1A / CBS 708.71 / DSM 1257 / FGSC 987), this protein is RuvB-like helicase 2 (hel-2).